A 397-amino-acid chain; its full sequence is Xyloglucan O-acetyltransferase 3 (397 aa).

Over M1–R3 the chain is Cytoplasmic. The chain crosses the membrane as a helical; Signal-anchor for type II membrane protein span at residues F4 to T24. Topologically, residues S25–S397 are lumenal. Disulfide bonds link C48–C98, C69–C134, C78–C370, and C293–C366. N-linked (GlcNAc...) asparagine glycosylation occurs at N66. Residues G121–S123 carry the GDS motif motif. S123 functions as the Nucleophile in the catalytic mechanism. N-linked (GlcNAc...) asparagine glycans are attached at residues N162, N182, and N294. The active-site Proton donor is D365. The DXXH motif motif lies at D365–H368. The active-site Proton acceptor is H368.

It belongs to the PC-esterase family. TBL subfamily.

Its subcellular location is the golgi apparatus membrane. Its function is as follows. Xyloglucan acetyltransferase that catalyzes the acetylation of fucosylated Gal residues on xyloglucan side chains. Predominantly catalyze 6-O-monoacetylation of Gal residues in the Fuc-Gal-Xyl trisaccharide side chains of xyloglucan oligomers. This is Xyloglucan O-acetyltransferase 3 from Populus trichocarpa (Western balsam poplar).